Consider the following 271-residue polypeptide: 2-aminophenol 1,6-dioxygenase alpha subunit (271 aa).

This sequence belongs to the LigB/MhpB extradiol dioxygenase family. As to quaternary structure, heterotetramer of 2 alpha and 2 beta subunits.

Functionally, component of the 2-aminophenol 1,6-dioxygenase complex that catalyzes the ring fission of 2-aminophenol to produce 2-aminomuconic 6-semialdehyde. AmnA seems to have a role in the stability of the complex. The protein is 2-aminophenol 1,6-dioxygenase alpha subunit (amnA) of Pseudomonas sp.